The chain runs to 828 residues: Glycerol-3-phosphate acyltransferase 1, mitochondrial (828 aa).

Residues 1 to 87 lie on the Cytoplasmic side of the membrane; it reads MEESSVTIGT…FFNPSIPSLG (87 aa). An important for mitochondrial localization region spans residues 80–120; sequence NPSIPSLGLRNVIYINETHTRHRGWLARRLSYILFVQERDV. An intramembrane segment occupies 88–118; it reads LRNVIYINETHTRHRGWLARRLSYILFVQER. The Cytoplasmic portion of the chain corresponds to 119 to 828; the sequence is DVHKGMFATS…LEYILSFVVL (710 aa). Residues 230–235 carry the HXXXXD motif motif; the sequence is HRSHID. Residues Arg-278, Arg-279, Lys-288, Arg-293, and Arg-328 each coordinate CoA. Phosphoserine is present on Ser-380. CoA is bound at residue Arg-462. Ser-688 and Ser-695 each carry phosphoserine. 2 positions are modified to N6-acetyllysine: Lys-780 and Lys-784.

It belongs to the GPAT/DAPAT family.

It is found in the mitochondrion outer membrane. It catalyses the reaction sn-glycerol 3-phosphate + an acyl-CoA = a 1-acyl-sn-glycero-3-phosphate + CoA. It carries out the reaction sn-glycerol 3-phosphate + hexadecanoyl-CoA = 1-hexadecanoyl-sn-glycero-3-phosphate + CoA. The enzyme catalyses (9Z,12Z)-octadecadienoyl-CoA + sn-glycerol 3-phosphate = 1-(9Z,12Z)-octadecadienoyl-sn-glycero-3-phosphate + CoA. The catalysed reaction is sn-glycerol 3-phosphate + (9Z)-octadecenoyl-CoA = 1-(9Z-octadecenoyl)-sn-glycero-3-phosphate + CoA. It catalyses the reaction sn-glycerol 3-phosphate + octadecanoyl-CoA = 1-octadecanoyl-sn-glycero-3-phosphate + CoA. It carries out the reaction dodecanoyl-CoA + sn-glycerol 3-phosphate = 1-dodecanoyl-sn-glycerol 3-phosphate + CoA. The enzyme catalyses 1-acyl-sn-glycero-3-phospho-(1'-sn-glycerol) + an acyl-CoA = a 1,2-diacyl-sn-glycero-3-phospho-(1'-sn-glycerol) + CoA. The protein operates within phospholipid metabolism; CDP-diacylglycerol biosynthesis; CDP-diacylglycerol from sn-glycerol 3-phosphate: step 1/3. In terms of biological role, mitochondrial membrane protein that catalyzes the essential first step of biosynthesis of glycerolipids such as triglycerides, phosphatidic acids and lysophosphatidic acids. Esterifies acyl-group from acyl-coenzyme A (acyl-CoA) to the sn-1 position of glycerol-3-phosphate, to produce lysophosphatidic acid. Has a narrow hydrophobic binding cleft that selects for a linear acyl chain. Catalytic activity is higher for substrates with a 16-carbon acyl chain. The polypeptide is Glycerol-3-phosphate acyltransferase 1, mitochondrial (Rattus norvegicus (Rat)).